Here is a 364-residue protein sequence, read N- to C-terminus: GDP-perosamine synthase (364 aa).

Lysine 183 is subject to N6-(pyridoxal phosphate)lysine.

Belongs to the DegT/DnrJ/EryC1 family. In terms of assembly, homodecamer. It depends on pyridoxal 5'-phosphate as a cofactor.

The catalysed reaction is GDP-alpha-D-perosamine + 2-oxoglutarate = GDP-4-dehydro-alpha-D-rhamnose + L-glutamate. It functions in the pathway bacterial outer membrane biogenesis; LPS O-antigen biosynthesis. Its activity is regulated as follows. Divalent ions have no significant effect on activity. Catalyzes the synthesis of GDP-perosamine from GDP-4-keto-6-deoxy-D-mannose and L-glutamate. Can use only L-glutamate as amino donor. The sequence is that of GDP-perosamine synthase from Escherichia coli O157:H7.